Here is a 221-residue protein sequence, read N- to C-terminus: Endo-1,4-beta-xylanase 2 (221 aa).

An N-terminal signal peptide occupies residues 1–19 (MVAFTSLLAGFAAIAGVLS). The GH11 domain occupies 32 to 221 (QTIGPGTGYS…SSGSASITVS (190 aa)). N-linked (GlcNAc...) asparagine glycosylation is found at asparagine 69 and asparagine 92. The active-site Nucleophile is glutamate 117. Residue glutamate 208 is the Proton donor of the active site.

It belongs to the glycosyl hydrolase 11 (cellulase G) family.

The protein resides in the secreted. It catalyses the reaction Endohydrolysis of (1-&gt;4)-beta-D-xylosidic linkages in xylans.. It functions in the pathway glycan degradation; xylan degradation. In terms of biological role, endo-1,4-beta-xylanase involved in the hydrolysis of xylan, a major structural heterogeneous polysaccharide found in plant biomass representing the second most abundant polysaccharide in the biosphere, after cellulose. This Trichoderma harzianum (Hypocrea lixii) protein is Endo-1,4-beta-xylanase 2 (Xyn2).